The primary structure comprises 1054 residues: Translation initiation factor IF-2 (1054 aa).

4 disordered regions span residues 57 to 213, 225 to 248, 287 to 315, and 401 to 436; these read DKRK…AASC, DPLA…NPGD, SGRP…HGLQ, and DHAG…KQEL. A compositionally biased stretch (polar residues) spans 92-104; the sequence is QEPSQAASDVSSP. Residues 111–213 show a composition bias toward low complexity; that stretch reads EASGAEAAAS…VTSGRRAASC (103 aa). The span at 401–418 shows a compositional bias: basic and acidic residues; sequence DHAGRGRELVDVSKNKDK. Residues 552–721 form the tr-type G domain; sequence TRPPVVTVMG…VLQAEVLELT (170 aa). Residues 561–568 form a G1 region; it reads GHVDHGKT. 561 to 568 contacts GTP; it reads GHVDHGKT. The tract at residues 586–590 is G2; sequence GITQH. The tract at residues 607-610 is G3; it reads DTPG. GTP is bound by residues 607–611 and 661–664; these read DTPGH and NKMD. The G4 stretch occupies residues 661-664; it reads NKMD. Positions 697–699 are G5; the sequence is SAK.

The protein belongs to the TRAFAC class translation factor GTPase superfamily. Classic translation factor GTPase family. IF-2 subfamily.

It is found in the cytoplasm. Functionally, one of the essential components for the initiation of protein synthesis. Protects formylmethionyl-tRNA from spontaneous hydrolysis and promotes its binding to the 30S ribosomal subunits. Also involved in the hydrolysis of GTP during the formation of the 70S ribosomal complex. The polypeptide is Translation initiation factor IF-2 (infB) (Stigmatella aurantiaca).